A 349-amino-acid chain; its full sequence is tRNA pseudouridine synthase D (349 aa).

F27 is a binding site for substrate. The Nucleophile role is filled by D80. N129 provides a ligand contact to substrate. The region spanning 155–303 is the TRUD domain; the sequence is GVPNYFGAQR…VEAARRAMLL (149 aa). F329 contacts substrate.

This sequence belongs to the pseudouridine synthase TruD family.

It carries out the reaction uridine(13) in tRNA = pseudouridine(13) in tRNA. Its function is as follows. Responsible for synthesis of pseudouridine from uracil-13 in transfer RNAs. This chain is tRNA pseudouridine synthase D, found in Escherichia coli O45:K1 (strain S88 / ExPEC).